The chain runs to 136 residues: Large ribosomal subunit protein bL19 (136 aa).

This sequence belongs to the bacterial ribosomal protein bL19 family.

This protein is located at the 30S-50S ribosomal subunit interface and may play a role in the structure and function of the aminoacyl-tRNA binding site. The polypeptide is Large ribosomal subunit protein bL19 (Xylella fastidiosa (strain M23)).